Consider the following 60-residue polypeptide: Ribosome modulation factor (60 aa).

This sequence belongs to the ribosome modulation factor family.

The protein resides in the cytoplasm. Functionally, during stationary phase, converts 70S ribosomes to an inactive dimeric form (100S ribosomes). This chain is Ribosome modulation factor, found in Kangiella koreensis (strain DSM 16069 / JCM 12317 / KCTC 12182 / SW-125).